Consider the following 520-residue polypeptide: 2-isopropylmalate synthase (520 aa).

The 263-residue stretch at 12–274 (IRIFDTTLRD…DSAINTPRIV (263 aa)) folds into the Pyruvate carboxyltransferase domain. Positions 21, 209, 211, and 245 each coordinate Mn(2+). The segment at 396 to 520 (RLASMTISDV…VVAGKTAAVA (125 aa)) is regulatory domain.

The protein belongs to the alpha-IPM synthase/homocitrate synthase family. LeuA type 1 subfamily. As to quaternary structure, homodimer. The cofactor is Mn(2+).

It is found in the cytoplasm. It catalyses the reaction 3-methyl-2-oxobutanoate + acetyl-CoA + H2O = (2S)-2-isopropylmalate + CoA + H(+). It functions in the pathway amino-acid biosynthesis; L-leucine biosynthesis; L-leucine from 3-methyl-2-oxobutanoate: step 1/4. Its function is as follows. Catalyzes the condensation of the acetyl group of acetyl-CoA with 3-methyl-2-oxobutanoate (2-ketoisovalerate) to form 3-carboxy-3-hydroxy-4-methylpentanoate (2-isopropylmalate). The protein is 2-isopropylmalate synthase of Xanthomonas euvesicatoria pv. vesicatoria (strain 85-10) (Xanthomonas campestris pv. vesicatoria).